The sequence spans 200 residues: 3-isopropylmalate dehydratase small subunit (200 aa).

It belongs to the LeuD family. LeuD type 1 subfamily. In terms of assembly, heterodimer of LeuC and LeuD.

It carries out the reaction (2R,3S)-3-isopropylmalate = (2S)-2-isopropylmalate. It functions in the pathway amino-acid biosynthesis; L-leucine biosynthesis; L-leucine from 3-methyl-2-oxobutanoate: step 2/4. In terms of biological role, catalyzes the isomerization between 2-isopropylmalate and 3-isopropylmalate, via the formation of 2-isopropylmaleate. The chain is 3-isopropylmalate dehydratase small subunit from Haemophilus influenzae (strain 86-028NP).